The following is a 254-amino-acid chain: Major prion protein (254 aa).

The N-terminal stretch at 1–22 (MANLSYWLLALFVATWTDVGLC) is a signal peptide. The segment at 23-231 (KKRPKPGGWN…SQAYYDGRRS (209 aa)) is interaction with GRB2, ERI3 and SYN1. Residues 25–108 (RPKPGGWNTG…WNKPNKPKTS (84 aa)) form a disordered region. 5 tandem repeats follow at residues 51–59 (PQGGGTWGQ), 60–67 (PHGGGWGQ), 68–75 (PHGGGWGQ), 76–83 (PHGGGWGQ), and 84–91 (PHGGGWGQ). A 5 X 8 AA tandem repeats of P-H-G-G-G-W-G-Q region spans residues 51–91 (PQGGGTWGQPHGGGWGQPHGGGWGQPHGGGWGQPHGGGWGQ). Gly residues predominate over residues 52-95 (QGGGTWGQPHGGGWGQPHGGGWGQPHGGGWGQPHGGGWGQGGGT). Residues H61, G62, G63, H69, G70, G71, H77, G78, G79, H85, G86, and G87 each coordinate Cu(2+). Positions 90 to 231 (GQGGGTHNQW…SQAYYDGRRS (142 aa)) are prP27-30 (protease resistant core). A disulfide bond links C179 and C214. N-linked (GlcNAc...) asparagine glycosylation is found at N181 and N197. The GPI-anchor amidated serine moiety is linked to residue S231. The propeptide at 232–254 (SAVLFSSPPVILLISFLIFLIVG) is removed in mature form.

It belongs to the prion family. In terms of assembly, monomer and homodimer. Has a tendency to aggregate into amyloid fibrils containing a cross-beta spine, formed by a steric zipper of superposed beta-strands. Soluble oligomers may represent an intermediate stage on the path to fibril formation. Copper binding may promote oligomerization. Interacts with GRB2, APP, ERI3/PRNPIP and SYN1. Mislocalized cytosolically exposed PrP interacts with MGRN1; this interaction alters MGRN1 subcellular location and causes lysosomal enlargement. Interacts with KIAA1191.

The protein localises to the cell membrane. The protein resides in the golgi apparatus. In terms of biological role, its primary physiological function is unclear. Has cytoprotective activity against internal or environmental stresses. May play a role in neuronal development and synaptic plasticity. May be required for neuronal myelin sheath maintenance. May play a role in iron uptake and iron homeostasis. Soluble oligomers are toxic to cultured neuroblastoma cells and induce apoptosis (in vitro). Association with GPC1 (via its heparan sulfate chains) targets PRNP to lipid rafts. Also provides Cu(2+) or Zn(2+) for the ascorbate-mediated GPC1 deaminase degradation of its heparan sulfate side chains. This is Major prion protein (PRNP) from Nothocricetulus migratorius (Gray dwarf hamster).